A 218-amino-acid chain; its full sequence is Mediator of RNA polymerase II transcription subunit 20 (218 aa).

The protein belongs to the Mediator complex subunit 20 family. Component of the Mediator complex.

It is found in the nucleus. In terms of biological role, component of the Mediator complex, a coactivator involved in the regulated transcription of nearly all RNA polymerase II-dependent genes. Mediator functions as a bridge to convey information from gene-specific regulatory proteins to the basal RNA polymerase II transcription machinery. Mediator is recruited to promoters by direct interactions with regulatory proteins and serves as a scaffold for the assembly of a functional preinitiation complex with RNA polymerase II and the general transcription factors. The protein is Mediator of RNA polymerase II transcription subunit 20 (SRB2) of Yarrowia lipolytica (strain CLIB 122 / E 150) (Yeast).